The chain runs to 229 residues: uncharacterized protein (229 aa).

Residues 2–69 (QRLAKLISNA…KSRLWIYYKP (68 aa)) enclose the S4 RNA-binding domain. The active-site Nucleophile is the Asp102.

The protein belongs to the pseudouridine synthase RsuA family.

The enzyme catalyses a uridine in RNA = a pseudouridine in RNA. This is an uncharacterized protein from Rickettsia bellii (strain RML369-C).